A 122-amino-acid chain; its full sequence is Large ribosomal subunit protein uL18 (122 aa).

This sequence belongs to the universal ribosomal protein uL18 family. As to quaternary structure, part of the 50S ribosomal subunit; part of the 5S rRNA/L5/L18/L25 subcomplex. Contacts the 5S and 23S rRNAs.

Its function is as follows. This is one of the proteins that bind and probably mediate the attachment of the 5S RNA into the large ribosomal subunit, where it forms part of the central protuberance. In Acetivibrio thermocellus (strain ATCC 27405 / DSM 1237 / JCM 9322 / NBRC 103400 / NCIMB 10682 / NRRL B-4536 / VPI 7372) (Clostridium thermocellum), this protein is Large ribosomal subunit protein uL18.